Consider the following 215-residue polypeptide: Ribonuclease T (215 aa).

Residues 20 to 194 (VVIDVETAGF…YDTLQTAKLF (175 aa)) form the Exonuclease domain. The Mg(2+) site is built by Asp23, Glu25, His181, and Asp186. The active-site Proton donor/acceptor is His181.

Belongs to the RNase T family. As to quaternary structure, homodimer. Mg(2+) is required as a cofactor.

Its function is as follows. Trims short 3' overhangs of a variety of RNA species, leaving a one or two nucleotide 3' overhang. Responsible for the end-turnover of tRNA: specifically removes the terminal AMP residue from uncharged tRNA (tRNA-C-C-A). Also appears to be involved in tRNA biosynthesis. In Yersinia pseudotuberculosis serotype O:1b (strain IP 31758), this protein is Ribonuclease T.